We begin with the raw amino-acid sequence, 226 residues long: ATP synthase F(0) complex subunit a (226 aa).

A run of 6 helical transmembrane segments spans residues 11–31, 68–88, 97–117, 138–158, 164–184, and 189–209; these read APSM…SILF, WALM…LGLL, QLSM…ITGF, IPML…ALAV, ITAG…LINI, and AFIT…VALI.

It belongs to the ATPase A chain family. In terms of assembly, component of the ATP synthase complex composed at least of ATP5F1A/subunit alpha, ATP5F1B/subunit beta, ATP5MC1/subunit c (homooctomer), MT-ATP6/subunit a, MT-ATP8/subunit 8, ATP5ME/subunit e, ATP5MF/subunit f, ATP5MG/subunit g, ATP5MK/subunit k, ATP5MJ/subunit j, ATP5F1C/subunit gamma, ATP5F1D/subunit delta, ATP5F1E/subunit epsilon, ATP5PF/subunit F6, ATP5PB/subunit b, ATP5PD/subunit d, ATP5PO/subunit OSCP. ATP synthase complex consists of a soluble F(1) head domain (subunits alpha(3) and beta(3)) - the catalytic core - and a membrane F(0) domain - the membrane proton channel (subunits c, a, 8, e, f, g, k and j). These two domains are linked by a central stalk (subunits gamma, delta, and epsilon) rotating inside the F1 region and a stationary peripheral stalk (subunits F6, b, d, and OSCP). Interacts with DNAJC30; interaction is direct.

It is found in the mitochondrion inner membrane. It catalyses the reaction H(+)(in) = H(+)(out). Functionally, subunit a, of the mitochondrial membrane ATP synthase complex (F(1)F(0) ATP synthase or Complex V) that produces ATP from ADP in the presence of a proton gradient across the membrane which is generated by electron transport complexes of the respiratory chain. ATP synthase complex consist of a soluble F(1) head domain - the catalytic core - and a membrane F(1) domain - the membrane proton channel. These two domains are linked by a central stalk rotating inside the F(1) region and a stationary peripheral stalk. During catalysis, ATP synthesis in the catalytic domain of F(1) is coupled via a rotary mechanism of the central stalk subunits to proton translocation. With the subunit c (ATP5MC1), forms the proton-conducting channel in the F(0) domain, that contains two crucial half-channels (inlet and outlet) that facilitate proton movement from the mitochondrial intermembrane space (IMS) into the matrix. Protons are taken up via the inlet half-channel and released through the outlet half-channel, following a Grotthuss mechanism. This is ATP synthase F(0) complex subunit a from Canis lupus familiaris (Dog).